The chain runs to 393 residues: tRNA(Met) cytidine acetate ligase (393 aa).

Gly-81, Asn-142, and Arg-167 together coordinate ATP.

It belongs to the TmcAL family.

The protein resides in the cytoplasm. The enzyme catalyses cytidine(34) in elongator tRNA(Met) + acetate + ATP = N(4)-acetylcytidine(34) in elongator tRNA(Met) + AMP + diphosphate. Functionally, catalyzes the formation of N(4)-acetylcytidine (ac(4)C) at the wobble position of elongator tRNA(Met), using acetate and ATP as substrates. First activates an acetate ion to form acetyladenylate (Ac-AMP) and then transfers the acetyl group to tRNA to form ac(4)C34. This Bacillus cereus (strain Q1) protein is tRNA(Met) cytidine acetate ligase.